Reading from the N-terminus, the 211-residue chain is 5,6-dimethylbenzimidazole synthase (211 aa).

FMN-binding positions include 22–26 (RRDVR), Ser50, Leu99, and Ser158.

Belongs to the BluB family. Homooctamer.

The catalysed reaction is FMNH2 + O2 = dialurate + 5,6-dimethylbenzimidazole + D-erythrose 4-phosphate + H(+). In terms of biological role, involved in the biosynthesis of cobalamin (vitamin B12). Catalyzes the oxidative fragmentation and contraction of the isoalloxazine heterocycle and the cleavage of the ribityl tail of FMNH(2) to form 5,6-dimethylbenzimidazole (DMB) and D-erythrose 4-phosphate (E4P). NAD(P)H is only required initially to reduce FMN and oxygen drives the oxidative fragmentation. The protein is 5,6-dimethylbenzimidazole synthase of Rhodospirillum rubrum (strain ATCC 11170 / ATH 1.1.1 / DSM 467 / LMG 4362 / NCIMB 8255 / S1).